We begin with the raw amino-acid sequence, 272 residues long: HMP-PP phosphatase (272 aa).

Residue aspartate 8 is the Nucleophile of the active site. Mg(2+) is bound by residues aspartate 8, aspartate 10, and aspartate 212.

Belongs to the HAD-like hydrolase superfamily. Cof family. The cofactor is Mg(2+).

The enzyme catalyses 4-amino-2-methyl-5-(diphosphooxymethyl)pyrimidine + H2O = 4-amino-2-methyl-5-(phosphooxymethyl)pyrimidine + phosphate + H(+). Its function is as follows. Catalyzes the hydrolysis of 4-amino-2-methyl-5-hydroxymethylpyrimidine pyrophosphate (HMP-PP) to 4-amino-2-methyl-5-hydroxymethylpyrimidine phosphate (HMP-P). In Salmonella agona (strain SL483), this protein is HMP-PP phosphatase.